A 197-amino-acid chain; its full sequence is Holliday junction resolvase RecU (197 aa).

Mg(2+) contacts are provided by Thr-82, Asp-84, Glu-97, and Gln-116.

It belongs to the RecU family. Mg(2+) is required as a cofactor.

It is found in the cytoplasm. It carries out the reaction Endonucleolytic cleavage at a junction such as a reciprocal single-stranded crossover between two homologous DNA duplexes (Holliday junction).. Endonuclease that resolves Holliday junction intermediates in genetic recombination. Cleaves mobile four-strand junctions by introducing symmetrical nicks in paired strands. Promotes annealing of linear ssDNA with homologous dsDNA. Required for DNA repair, homologous recombination and chromosome segregation. The protein is Holliday junction resolvase RecU of Streptococcus mutans serotype c (strain ATCC 700610 / UA159).